Consider the following 120-residue polypeptide: UPF0145 protein Mboo_1021 (120 aa).

It belongs to the UPF0145 family.

This chain is UPF0145 protein Mboo_1021, found in Methanoregula boonei (strain DSM 21154 / JCM 14090 / 6A8).